A 342-amino-acid chain; its full sequence is SH3 domain-containing YSC84-like protein 1 (342 aa).

Positions 218–266 are disordered; it reads GQRINARKAAREQRKSSAKELPPKPLSRPQQSSAPVQLNSGSQSNRNEY. Residues 226–239 are compositionally biased toward basic and acidic residues; sequence AAREQRKSSAKELP. A compositionally biased stretch (polar residues) spans 245–263; sequence RPQQSSAPVQLNSGSQSNR. The SH3 domain occupies 283 to 342; that stretch reads NQPIEVTALYSFEGQQPGDLNFQAGDRITVISKTDSHFDWWEGKLRGQTGIFPANYVTMN.

Belongs to the SH3YL1 family. In terms of assembly, interacts with SH3D19.

This chain is SH3 domain-containing YSC84-like protein 1 (SH3YL1), found in Homo sapiens (Human).